A 94-amino-acid chain; its full sequence is C-X-C motif chemokine 11-1 (94 aa).

Positions 1–19 (MKTVTALLLVSLAVVAIEG) are cleaved as a signal peptide. 2 disulfides stabilise this stretch: cysteine 27–cysteine 54 and cysteine 29–cysteine 71.

Belongs to the intercrine alpha (chemokine CxC) family.

It localises to the secreted. In terms of biological role, ligand for cxcr3.2. Chemotactic for macrophages. This chain is C-X-C motif chemokine 11-1 (cxcl11.1), found in Danio rerio (Zebrafish).